Reading from the N-terminus, the 135-residue chain is Sex-regulated protein janus-A (135 aa).

K37 is a binding site for substrate. H63 (proton acceptor) is an active-site residue. 104–106 (SQG) serves as a coordination point for substrate.

It belongs to the janus family.

Functionally, janA and janB regulate somatic sex differentiation. In Drosophila yakuba (Fruit fly), this protein is Sex-regulated protein janus-A (janA).